A 28-amino-acid chain; its full sequence is Trypsin inhibitor A (28 aa).

Intrachain disulfides connect cysteine 3–cysteine 20, cysteine 10–cysteine 22, and cysteine 16–cysteine 27.

Belongs to the protease inhibitor I7 (squash-type serine protease inhibitor) family.

Its subcellular location is the secreted. Inhibits trypsin. This is Trypsin inhibitor A from Momordica charantia (Bitter gourd).